A 178-amino-acid chain; its full sequence is Photosystem I assembly protein Ycf4 (178 aa).

2 consecutive transmembrane segments (helical) span residues 19-39 (ILVA…SLSS) and 61-81 (LVMG…WAVI).

This sequence belongs to the Ycf4 family.

Its subcellular location is the cellular thylakoid membrane. Seems to be required for the assembly of the photosystem I complex. The polypeptide is Photosystem I assembly protein Ycf4 (Synechococcus sp. (strain WH7803)).